The chain runs to 1400 residues: DNA-directed RNA polymerase subunit beta' (1400 aa).

Zn(2+) is bound by residues C71, C73, C86, and C89. The Mg(2+) site is built by D462, D464, and D466. Residues C820, C893, C900, and C903 each contribute to the Zn(2+) site.

Belongs to the RNA polymerase beta' chain family. The RNAP catalytic core consists of 2 alpha, 1 beta, 1 beta' and 1 omega subunit. When a sigma factor is associated with the core the holoenzyme is formed, which can initiate transcription. The cofactor is Mg(2+). Requires Zn(2+) as cofactor.

It catalyses the reaction RNA(n) + a ribonucleoside 5'-triphosphate = RNA(n+1) + diphosphate. DNA-dependent RNA polymerase catalyzes the transcription of DNA into RNA using the four ribonucleoside triphosphates as substrates. This is DNA-directed RNA polymerase subunit beta' from Methylobacterium nodulans (strain LMG 21967 / CNCM I-2342 / ORS 2060).